A 559-amino-acid polypeptide reads, in one-letter code: 2,3-bisphosphoglycerate-independent phosphoglycerate mutase (559 aa).

2 residues coordinate Mn(2+): Asp-28 and Ser-81. The active-site Phosphoserine intermediate is Ser-81. Substrate-binding positions include His-140, 170-171, Arg-206, Arg-213, 286-289, and Lys-361; these read RD and RADR. The Mn(2+) site is built by Asp-430, His-434, Asp-471, His-472, and His-501.

This sequence belongs to the BPG-independent phosphoglycerate mutase family. Monomer. Mn(2+) serves as cofactor. In terms of tissue distribution, found ubiquitously in germinating seed.

It localises to the cytoplasm. The enzyme catalyses (2R)-2-phosphoglycerate = (2R)-3-phosphoglycerate. The protein operates within carbohydrate degradation; glycolysis; pyruvate from D-glyceraldehyde 3-phosphate: step 3/5. Functionally, catalyzes the interconversion of 2-phosphoglycerate and 3-phosphoglycerate. The polypeptide is 2,3-bisphosphoglycerate-independent phosphoglycerate mutase (Nicotiana tabacum (Common tobacco)).